The chain runs to 507 residues: Maturase K (507 aa).

The protein belongs to the intron maturase 2 family. MatK subfamily.

The protein resides in the plastid. The protein localises to the chloroplast. Functionally, usually encoded in the trnK tRNA gene intron. Probably assists in splicing its own and other chloroplast group II introns. This is Maturase K from Nymphaea alba (White water-lily).